Here is a 97-residue protein sequence, read N- to C-terminus: DNA-binding protein NEQ150 (97 aa).

The protein belongs to the PDCD5 family.

In Nanoarchaeum equitans (strain Kin4-M), this protein is DNA-binding protein NEQ150.